We begin with the raw amino-acid sequence, 430 residues long: Trigger factor (430 aa).

Residues 163–248 form the PPIase FKBP-type domain; the sequence is GDIAVIDFEG…LNSLKRKNMP (86 aa).

It belongs to the FKBP-type PPIase family. Tig subfamily.

It localises to the cytoplasm. It carries out the reaction [protein]-peptidylproline (omega=180) = [protein]-peptidylproline (omega=0). In terms of biological role, involved in protein export. Acts as a chaperone by maintaining the newly synthesized protein in an open conformation. Functions as a peptidyl-prolyl cis-trans isomerase. The protein is Trigger factor of Brevibacillus brevis (strain 47 / JCM 6285 / NBRC 100599).